The chain runs to 197 residues: MQKVVLATGNPGKVRELASLLADFGLDIVAQTELGVDSAEETGLTFIENAILKARHAAQITGLPAIADDSGLAVDALGGAPGIYSARYAGAEASDQQNLDKLLLTVKDVPDEQRRASFHCVLVYLRHAEDPTPIVCHGSWQGVLTHQSSGSGGFGYDPIFFVPELGKTAAELTREEKNAQSHRGQALRLLLDALRNA.

Position 8–13 (8–13 (TGNPGK)) interacts with substrate. Mg(2+)-binding residues include Glu40 and Asp69. The active-site Proton acceptor is Asp69. Substrate is bound by residues Ser70, 154–157 (FGYD), Lys177, and 182–183 (HR).

The protein belongs to the HAM1 NTPase family. Homodimer. It depends on Mg(2+) as a cofactor.

The enzyme catalyses XTP + H2O = XMP + diphosphate + H(+). It carries out the reaction dITP + H2O = dIMP + diphosphate + H(+). It catalyses the reaction ITP + H2O = IMP + diphosphate + H(+). Functionally, pyrophosphatase that catalyzes the hydrolysis of nucleoside triphosphates to their monophosphate derivatives, with a high preference for the non-canonical purine nucleotides XTP (xanthosine triphosphate), dITP (deoxyinosine triphosphate) and ITP. Seems to function as a house-cleaning enzyme that removes non-canonical purine nucleotides from the nucleotide pool, thus preventing their incorporation into DNA/RNA and avoiding chromosomal lesions. The protein is dITP/XTP pyrophosphatase of Pectobacterium atrosepticum (strain SCRI 1043 / ATCC BAA-672) (Erwinia carotovora subsp. atroseptica).